A 423-amino-acid polypeptide reads, in one-letter code: UDP-N-acetylmuramoylalanine--D-glutamate ligase (423 aa).

Position 112 to 118 (112 to 118) interacts with ATP; that stretch reads GSVGKST.

The protein belongs to the MurCDEF family.

The protein localises to the cytoplasm. It carries out the reaction UDP-N-acetyl-alpha-D-muramoyl-L-alanine + D-glutamate + ATP = UDP-N-acetyl-alpha-D-muramoyl-L-alanyl-D-glutamate + ADP + phosphate + H(+). It participates in cell wall biogenesis; peptidoglycan biosynthesis. Its function is as follows. Cell wall formation. Catalyzes the addition of glutamate to the nucleotide precursor UDP-N-acetylmuramoyl-L-alanine (UMA). This Thermosipho africanus (strain TCF52B) protein is UDP-N-acetylmuramoylalanine--D-glutamate ligase.